The chain runs to 418 residues: Light-independent protochlorophyllide reductase subunit N (418 aa).

Residues cysteine 17, cysteine 42, and cysteine 103 each coordinate [4Fe-4S] cluster.

The protein belongs to the BchN/ChlN family. As to quaternary structure, protochlorophyllide reductase is composed of three subunits; ChlL, ChlN and ChlB. Forms a heterotetramer of two ChlB and two ChlN subunits. Requires [4Fe-4S] cluster as cofactor.

It catalyses the reaction chlorophyllide a + oxidized 2[4Fe-4S]-[ferredoxin] + 2 ADP + 2 phosphate = protochlorophyllide a + reduced 2[4Fe-4S]-[ferredoxin] + 2 ATP + 2 H2O. It functions in the pathway porphyrin-containing compound metabolism; chlorophyll biosynthesis (light-independent). Component of the dark-operative protochlorophyllide reductase (DPOR) that uses Mg-ATP and reduced ferredoxin to reduce ring D of protochlorophyllide (Pchlide) to form chlorophyllide a (Chlide). This reaction is light-independent. The NB-protein (ChlN-ChlB) is the catalytic component of the complex. In Prochlorococcus marinus subsp. pastoris (strain CCMP1986 / NIES-2087 / MED4), this protein is Light-independent protochlorophyllide reductase subunit N.